The following is a 400-amino-acid chain: MLRNSVITPTPPAKNLASFVTKPTTDIMGYHDNTTRLSNRIDDIETWRETLEKTLADVDEEIRKLEEDKDLAERALEAKALPLDVASECKTLRDGRRDNDVVDDLANSEVGKEIDVIEGIKDALQAKVSSAFEQLCLLQEARQQLHADLRDKTEAKKIDTYCHDLTISSPDICYQPNSTRTPKGSTTPQTWEDFSRYNKDRADAEMRSSQRLREAIHSTVAQTDNDLEAQRQATEFALRKRIHEMKRAKDEDEWQKKNTEEEIAKQERNIRELEQAIKDKENPLKLAMTRLENRTYRPNVELCRDNAQYGLVNEVHEIQDSIKALEKKLQDAHNARDACEKQLYRINKDLELKNNSLDLDNKCMQVREKLTTGPVTQTMNNLSTFKTDRELYTAQRSLLA.

3 coiled-coil regions span residues 35 to 81, 236 to 294, and 310 to 353; these read TRLS…AKAL, FALR…LENR, and GLVN…LELK.

This sequence belongs to the tektin family. As to quaternary structure, may form a heterodimer with tektin a or exist as a homodimer. Cilia and flagella.

The protein resides in the cytoplasm. It is found in the cytoskeleton. In terms of biological role, structural component of ciliary and flagellar microtubules. The chain is Tektin-B1 from Strongylocentrotus purpuratus (Purple sea urchin).